Consider the following 987-residue polypeptide: Leucine--tRNA ligase (987 aa).

The 'HIGH' region signature appears at 69–80 (PYPSGKGLHVGH). Positions 760–764 (KMGKS) match the 'KMSKS' region motif. ATP is bound at residue lysine 763.

The protein belongs to the class-I aminoacyl-tRNA synthetase family.

It is found in the cytoplasm. The enzyme catalyses tRNA(Leu) + L-leucine + ATP = L-leucyl-tRNA(Leu) + AMP + diphosphate. The sequence is that of Leucine--tRNA ligase from Bifidobacterium longum (strain DJO10A).